Consider the following 284-residue polypeptide: L-fucose dehydrogenase (284 aa).

Residues arginine 19, isoleucine 21, aspartate 40, lysine 41, aspartate 62, valine 63, asparagine 89, tyrosine 154, lysine 158, isoleucine 187, threonine 189, and leucine 191 each coordinate NAD(+).

This sequence belongs to the short-chain dehydrogenases/reductases (SDR) family.

It catalyses the reaction L-fucose + NAD(+) = L-fucono-1,5-lactone + NADH + H(+). The enzyme catalyses D-arabinose + NAD(+) = D-arabinono-1,5-lactone + NADH + H(+). It carries out the reaction L-galactose + NAD(+) = L-galactono-1,5-lactone + NADH + H(+). It participates in carbohydrate degradation; L-fucose degradation. Functionally, catalyzes the NAD(+)-dependent oxidation of L-fucose, yielding L-fucono-1,5-lactone, which rapidly converts spontaneously to L-fucone-1,4-lactone. Can also act on D-arabinose and L-galactose, with lower catalytic efficiency. Does not use NADPH. May be the initial enzyme of the putative L-fucose degradation pathway in mammals. In Oryctolagus cuniculus (Rabbit), this protein is L-fucose dehydrogenase (HSD17B14).